Reading from the N-terminus, the 433-residue chain is uncharacterized protein (433 aa).

The protein localises to the virion. This is an uncharacterized protein from Acanthamoeba polyphaga (Amoeba).